The sequence spans 484 residues: Glutamate--tRNA ligase (484 aa).

Residues 12–22 (PSPTGEPHVGT) carry the 'HIGH' region motif. The 'KMSKS' region signature appears at 253 to 257 (KLSKR). K256 lines the ATP pocket.

The protein belongs to the class-I aminoacyl-tRNA synthetase family. Glutamate--tRNA ligase type 1 subfamily. Monomer.

It is found in the cytoplasm. It carries out the reaction tRNA(Glu) + L-glutamate + ATP = L-glutamyl-tRNA(Glu) + AMP + diphosphate. Functionally, catalyzes the attachment of glutamate to tRNA(Glu) in a two-step reaction: glutamate is first activated by ATP to form Glu-AMP and then transferred to the acceptor end of tRNA(Glu). The chain is Glutamate--tRNA ligase from Rhizobium leguminosarum bv. trifolii (strain WSM2304).